The chain runs to 206 residues: Venom allergen 5 (206 aa).

4 cysteine pairs are disulfide-bonded: C4/C16, C8/C104, C28/C96, and C172/C189. The 144-residue stretch at 48–191 (EEHNRFRQKV…MKIHYLICNY (144 aa)) folds into the SCP domain.

Belongs to the CRISP family. Venom allergen 5-like subfamily. As to expression, expressed by the venom gland.

The protein resides in the secreted. This Polistes gallicus (Paper wasp) protein is Venom allergen 5.